A 294-amino-acid polypeptide reads, in one-letter code: Enoyl-CoA hydratase domain-containing protein 3, mitochondrial (294 aa).

A mitochondrion-targeting transit peptide spans 1 to 61 (MSWLRSCGER…IILNNPQQRN (61 aa)).

Belongs to the enoyl-CoA hydratase/isomerase family.

The protein localises to the mitochondrion. In terms of biological role, may play a role in fatty acid biosynthesis and insulin sensitivity. The chain is Enoyl-CoA hydratase domain-containing protein 3, mitochondrial (echdc3) from Xenopus laevis (African clawed frog).